Here is a 541-residue protein sequence, read N- to C-terminus: Zingiberene synthase (541 aa).

Residues Asp-295, Asp-299, Asn-439, Ser-443, and Glu-447 each contribute to the Mg(2+) site. The short motif at 295–299 (DDIID) is the DDXXD motif element.

This sequence belongs to the terpene synthase family. It depends on Mg(2+) as a cofactor. Requires Mn(2+) as cofactor.

The protein localises to the cytoplasm. The catalysed reaction is (2E,6E)-farnesyl diphosphate = alpha-zingiberene + diphosphate. Its pathway is secondary metabolite biosynthesis; terpenoid biosynthesis. Sesquiterpene synthase converting farnesyl diphosphate into two major products, zingiberene &gt; beta-sesquiphellandrene, and five minor products, 7-epi-sesquithujene, sesquisabinene A, (E)-alpha-bergamotene, (E)-beta-farnesene and beta-bisabolene. Can also accept geranyl diphosphate as substrate, producing nine monoterpenes, with myrcene, limonene and alpha-terpinolene as the major products. The chain is Zingiberene synthase (TPS1) from Sorghum bicolor (Sorghum).